A 194-amino-acid polypeptide reads, in one-letter code: Dephospho-CoA kinase (194 aa).

The DPCK domain maps to T3–L194. ATP is bound at residue G11–T16.

Belongs to the CoaE family.

It is found in the cytoplasm. The catalysed reaction is 3'-dephospho-CoA + ATP = ADP + CoA + H(+). It participates in cofactor biosynthesis; coenzyme A biosynthesis; CoA from (R)-pantothenate: step 5/5. Catalyzes the phosphorylation of the 3'-hydroxyl group of dephosphocoenzyme A to form coenzyme A. The protein is Dephospho-CoA kinase of Corynebacterium jeikeium (strain K411).